The primary structure comprises 160 residues: Endoribonuclease YbeY (160 aa).

Zn(2+) contacts are provided by His125, His129, and His135.

Belongs to the endoribonuclease YbeY family. The cofactor is Zn(2+).

The protein localises to the cytoplasm. Functionally, single strand-specific metallo-endoribonuclease involved in late-stage 70S ribosome quality control and in maturation of the 3' terminus of the 16S rRNA. The protein is Endoribonuclease YbeY of Dehalococcoides mccartyi (strain ATCC BAA-2100 / JCM 16839 / KCTC 5957 / BAV1).